Here is a 689-residue protein sequence, read N- to C-terminus: DNA topoisomerase 1 (689 aa).

Residues 3–113 enclose the Toprim domain; it reads DNLVIVESPA…KENRVVFNEI (111 aa). Positions 9 and 82 each coordinate Mg(2+). The Topo IA-type catalytic domain occupies 129-557; that stretch reads EMNLVDAQQA…FFSSFKQDVE (429 aa). Residues 163-168 are interaction with DNA; that stretch reads SAGRVQ. The O-(5'-phospho-DNA)-tyrosine intermediate role is filled by Tyr-298. The segment at 328–357 is disordered; it reads SKRKASGKQGDQDAHEAIRPSSTMRTPDDM. C4-type zinc fingers lie at residues 577–603, 617–645, and 658–681; these read CEVCGSPMVIKMGRYGKFMACSNFPDC, CPKCNDGDVVERKSKKNRVFYGCSKYPEC, and CPKCNQYLVENKKGKTTQVICSNC.

The protein belongs to the type IA topoisomerase family. In terms of assembly, monomer. The cofactor is Mg(2+).

The catalysed reaction is ATP-independent breakage of single-stranded DNA, followed by passage and rejoining.. Releases the supercoiling and torsional tension of DNA, which is introduced during the DNA replication and transcription, by transiently cleaving and rejoining one strand of the DNA duplex. Introduces a single-strand break via transesterification at a target site in duplex DNA. The scissile phosphodiester is attacked by the catalytic tyrosine of the enzyme, resulting in the formation of a DNA-(5'-phosphotyrosyl)-enzyme intermediate and the expulsion of a 3'-OH DNA strand. The free DNA strand then undergoes passage around the unbroken strand, thus removing DNA supercoils. Finally, in the religation step, the DNA 3'-OH attacks the covalent intermediate to expel the active-site tyrosine and restore the DNA phosphodiester backbone. The chain is DNA topoisomerase 1 from Staphylococcus aureus (strain bovine RF122 / ET3-1).